Reading from the N-terminus, the 262-residue chain is Large ribosomal subunit protein bL9m (262 aa).

The transit peptide at 1–49 directs the protein to the mitochondrion; the sequence is MAASMAPRCSSLLWAGAAWLRQRGIGELLQPRIERSTPGRDFSLSHYQS.

This sequence belongs to the bacterial ribosomal protein bL9 family. Component of the mitochondrial ribosome large subunit (39S) which comprises a 16S rRNA and about 50 distinct proteins.

Its subcellular location is the mitochondrion. This is Large ribosomal subunit protein bL9m (Mrpl9) from Rattus norvegicus (Rat).